The following is a 103-amino-acid chain: Urease subunit beta (103 aa).

It belongs to the urease beta subunit family. As to quaternary structure, heterotrimer of UreA (gamma), UreB (beta) and UreC (alpha) subunits. Three heterotrimers associate to form the active enzyme.

The protein localises to the cytoplasm. The catalysed reaction is urea + 2 H2O + H(+) = hydrogencarbonate + 2 NH4(+). The protein operates within nitrogen metabolism; urea degradation; CO(2) and NH(3) from urea (urease route): step 1/1. The sequence is that of Urease subunit beta from Streptomyces avermitilis (strain ATCC 31267 / DSM 46492 / JCM 5070 / NBRC 14893 / NCIMB 12804 / NRRL 8165 / MA-4680).